Here is a 922-residue protein sequence, read N- to C-terminus: DNA gyrase subunit A (922 aa).

The Topo IIA-type catalytic domain maps to 34–534 (LPDVRDGLKP…SSAEINIEDL (501 aa)). Catalysis depends on tyrosine 122, which acts as the O-(5'-phospho-DNA)-tyrosine intermediate. The GyrA-box signature appears at 561–567 (QRRGGRG). Disordered stretches follow at residues 715–763 (MQPM…VRPM) and 899–922 (IDGE…DPEE). Residues 723 to 743 (DDVDGDDESVIDAGNDDDGSD) are compositionally biased toward acidic residues.

It belongs to the type II topoisomerase GyrA/ParC subunit family. In terms of assembly, heterotetramer, composed of two GyrA and two GyrB chains. In the heterotetramer, GyrA contains the active site tyrosine that forms a transient covalent intermediate with DNA, while GyrB binds cofactors and catalyzes ATP hydrolysis.

The protein resides in the cytoplasm. It catalyses the reaction ATP-dependent breakage, passage and rejoining of double-stranded DNA.. Its function is as follows. A type II topoisomerase that negatively supercoils closed circular double-stranded (ds) DNA in an ATP-dependent manner to modulate DNA topology and maintain chromosomes in an underwound state. Negative supercoiling favors strand separation, and DNA replication, transcription, recombination and repair, all of which involve strand separation. Also able to catalyze the interconversion of other topological isomers of dsDNA rings, including catenanes and knotted rings. Type II topoisomerases break and join 2 DNA strands simultaneously in an ATP-dependent manner. The polypeptide is DNA gyrase subunit A (Aeromonas salmonicida).